The primary structure comprises 206 residues: Putative NAD(P)H nitroreductase MhqN (206 aa).

FMN contacts are provided by residues R11–S13, Q68–K70, I157–G158, R193, and R196.

Belongs to the nitroreductase family. In terms of assembly, homodimer. It depends on FMN as a cofactor.

The protein localises to the cytoplasm. Its function is as follows. Putative nitroreductase that may contribute to the degradation of aromatic compounds. In Bacillus subtilis (strain 168), this protein is Putative NAD(P)H nitroreductase MhqN (mhqN).